The chain runs to 506 residues: Putative basic amino acid antiporter YfcC (506 aa).

13 helical membrane passes run 19-39, 107-127, 148-168, 171-191, 208-228, 231-251, 287-307, 310-330, 352-372, 398-418, 419-439, 442-462, and 485-505; these read LVII…VPVG, GTAV…GIVM, ILFI…FGMG, AVAF…DSIT, WMNP…VLSG, LRIV…MVYA, WLVL…VIVN, FIPE…IIGV, MMIA…LVGN, AVAA…VTSG, SGQA…VGVN, VTVL…PTSA, and LLGL…LMGY.

This sequence to H.influenzae HI_0594. The protein to B.subtilis YcgA.

Its subcellular location is the cell inner membrane. In terms of biological role, metabolomic profiling of different yfcC over-expression and deletion strains suggests that it may affect the glyoxylate shunt. The polypeptide is Putative basic amino acid antiporter YfcC (yfcC) (Escherichia coli (strain K12)).